Consider the following 456-residue polypeptide: Keratin, type I cytoskeletal 12 (456 aa).

Residues 1–19 (MSLSVRTSALSRRSSSQNG) are compositionally biased toward polar residues. Positions 1 to 25 (MSLSVRTSALSRRSSSQNGVAGRPW) are disordered. Residues 1–114 (MSLSVRTSAL…GNDGGLLSGS (114 aa)) form a head region. Positions 115-150 (EKETMQNLNDRLASYLGKVRALEEANAELENKIREW) are coil 1A. One can recognise an IF rod domain in the interval 115–402 (EKETMQNLND…RLLEGDTQGD (288 aa)). The segment at 154 to 171 (RRTGDSGSQSDYSKYYPL) is linker 1. Residues 172–263 (IEDLKNKIIS…KNHEEELQSF (92 aa)) form a coil 1B region. A linker 12 region spans residues 264–286 (QAGGPGEVNVEMDAAPGVDLTKS). Positions 287–397 (GELRKEINSN…IETYRRLLEG (111 aa)) are coil 2. The tail stretch occupies residues 398 to 456 (DTQGDGFDESLSLTVSKPQAPSVDSSKDPNKTRKIKTVVQEIVNGEVVSSQVQELEEAM). The segment at 405–430 (DESLSLTVSKPQAPSVDSSKDPNKTR) is disordered. The span at 408–421 (LSLTVSKPQAPSVD) shows a compositional bias: polar residues.

The protein belongs to the intermediate filament family. As to quaternary structure, heterotetramer of two type I and two type II keratins. Keratin-3 associates with keratin-12.

Its function is as follows. Involved in corneal epithelium organization, integrity and corneal keratin expression. In Rattus norvegicus (Rat), this protein is Keratin, type I cytoskeletal 12.